A 678-amino-acid chain; its full sequence is Zinc finger translocation-associated protein (678 aa).

4 disordered regions span residues 1–100 (MEPG…PGRD), 182–250 (LGVQ…GSRG), 329–417 (QPEA…HRRH), and 490–583 (LGPP…NYQP). Residues 62 to 78 (SAPLPSSRARGPASSGR) show a composition bias toward low complexity. Over residues 79–88 (KYSDHCEARA) the composition is skewed to basic and acidic residues. Positions 187–201 (AEEEEEEEEEEEEEG) are enriched in acidic residues. Residue lysine 375 forms a Glycyl lysine isopeptide (Lys-Gly) (interchain with G-Cter in SUMO2) linkage. Over residues 388-398 (AEEEEELEEGE) the composition is skewed to acidic residues. Residues 492–504 (PPRPESPQGPIPP) are compositionally biased toward pro residues. 2 stretches are compositionally biased toward acidic residues: residues 513-529 (GGGDEEEEPEEEEEEWG) and 543-553 (AEEEEDEEDGQ). Pro residues predominate over residues 560 to 572 (LPPPPPPPPPPPP). Residues 573–583 (RSREQRRNYQP) show a composition bias toward basic and acidic residues.

In Homo sapiens (Human), this protein is Zinc finger translocation-associated protein.